The following is a 363-amino-acid chain: NAD(P)H-quinone oxidoreductase subunit 1, chloroplastic (363 aa).

6 helical membrane passes run 30–50 (LVPI…IVWL), 98–118 (FSIG…IIPF), 129–149 (IGVF…LMSG), 248–268 (YSGI…LVSS), 300–320 (VFGT…FLFI), and 336–356 (LLNL…LLTT).

It belongs to the complex I subunit 1 family. NDH is composed of at least 16 different subunits, 5 of which are encoded in the nucleus.

The protein localises to the plastid. It localises to the chloroplast thylakoid membrane. The enzyme catalyses a plastoquinone + NADH + (n+1) H(+)(in) = a plastoquinol + NAD(+) + n H(+)(out). It carries out the reaction a plastoquinone + NADPH + (n+1) H(+)(in) = a plastoquinol + NADP(+) + n H(+)(out). Its function is as follows. NDH shuttles electrons from NAD(P)H:plastoquinone, via FMN and iron-sulfur (Fe-S) centers, to quinones in the photosynthetic chain and possibly in a chloroplast respiratory chain. The immediate electron acceptor for the enzyme in this species is believed to be plastoquinone. Couples the redox reaction to proton translocation, and thus conserves the redox energy in a proton gradient. In Vitis vinifera (Grape), this protein is NAD(P)H-quinone oxidoreductase subunit 1, chloroplastic.